The primary structure comprises 120 residues: Ribonuclease P protein component 2 (120 aa).

This sequence belongs to the eukaryotic/archaeal RNase P protein component 2 family. In terms of assembly, consists of a catalytic RNA component and at least 4-5 protein subunits. Forms a subcomplex with Rnp3 which stimulates the catalytic RNA.

Its subcellular location is the cytoplasm. The enzyme catalyses Endonucleolytic cleavage of RNA, removing 5'-extranucleotides from tRNA precursor.. Its function is as follows. Part of ribonuclease P, a protein complex that generates mature tRNA molecules by cleaving their 5'-ends. The RNA is catalytic, but its KM for pre-tRNA is 170-fold decreased in the presence of the 4 known protein subunits (Rnp1-4). The protein subunits also decrease the amount of Mg(2+) needed for activity. The polypeptide is Ribonuclease P protein component 2 (Pyrococcus furiosus (strain ATCC 43587 / DSM 3638 / JCM 8422 / Vc1)).